The following is a 498-amino-acid chain: Zinc finger protein 79 (498 aa).

A disordered region spans residues M1 to E23. The KRAB domain occupies T38–P109. 11 C2H2-type zinc fingers span residues Y193 to H215, Y221 to H243, Y249 to H271, Y277 to H299, Y305 to H327, Y333 to H355, Y361 to H383, Y389 to H411, Y417 to H439, Y445 to H467, and Y473 to H495.

It belongs to the krueppel C2H2-type zinc-finger protein family.

It is found in the nucleus. Its function is as follows. May be involved in transcriptional regulation. The sequence is that of Zinc finger protein 79 (ZNF79) from Homo sapiens (Human).